Reading from the N-terminus, the 300-residue chain is MTKVSVIGSISMDLVTRTNRVPNAGETVFGEDFAMVPGGKGANQAVAFARLSPNEVSMIGAVGKDAFGESILQNFKENAVLFENVGTVPQTTGIAQITLYDDDNRIIIIPGANNEVLPSYLADLWEKIKESQLVILQNEIPHETNLAIAKFCKENAIKVLYNPAPARKTDLEMIDFVDYITPNEHECKELFPNLALEEILKKYSNRLIVTLGSEGVIFHDGETLQKIPAIKAKVVDTTGAGDTFNGAFAFGLTENLSISDSIRLAVVASHLSIQKFGAQGGMPKLSEVKAKLKELEINLY.

Residues 11 to 13 (SMD), 39 to 43 (GKGAN), and Glu139 each bind substrate. ATP contacts are provided by residues Asn183 and 210–215 (TLGSEG). K(+)-binding residues include Asp236 and Thr238. Residue 241 to 242 (GD) participates in ATP binding. Asp242 lines the substrate pocket. Asp242 serves as the catalytic Proton acceptor. K(+) contacts are provided by Ser272, Lys275, and Gly277.

The protein belongs to the carbohydrate kinase PfkB family. Ribokinase subfamily. As to quaternary structure, homodimer. Mg(2+) is required as a cofactor.

The protein resides in the cytoplasm. The catalysed reaction is D-ribose + ATP = D-ribose 5-phosphate + ADP + H(+). Its pathway is carbohydrate metabolism; D-ribose degradation; D-ribose 5-phosphate from beta-D-ribopyranose: step 2/2. Activated by a monovalent cation that binds near, but not in, the active site. The most likely occupant of the site in vivo is potassium. Ion binding induces a conformational change that may alter substrate affinity. Catalyzes the phosphorylation of ribose at O-5 in a reaction requiring ATP and magnesium. The resulting D-ribose-5-phosphate can then be used either for sythesis of nucleotides, histidine, and tryptophan, or as a component of the pentose phosphate pathway. The chain is Ribokinase from Lactococcus lactis subsp. lactis (strain IL1403) (Streptococcus lactis).